A 121-amino-acid chain; its full sequence is Small ribosomal subunit protein uS13 (121 aa).

Positions 91–121 (HRRGLPVRGQKTKNNARTRKGPVKTVANKKK) are disordered.

The protein belongs to the universal ribosomal protein uS13 family. In terms of assembly, part of the 30S ribosomal subunit. Forms a loose heterodimer with protein S19. Forms two bridges to the 50S subunit in the 70S ribosome.

Functionally, located at the top of the head of the 30S subunit, it contacts several helices of the 16S rRNA. In the 70S ribosome it contacts the 23S rRNA (bridge B1a) and protein L5 of the 50S subunit (bridge B1b), connecting the 2 subunits; these bridges are implicated in subunit movement. Contacts the tRNAs in the A and P-sites. This is Small ribosomal subunit protein uS13 from Staphylococcus saprophyticus subsp. saprophyticus (strain ATCC 15305 / DSM 20229 / NCIMB 8711 / NCTC 7292 / S-41).